A 96-amino-acid chain; its full sequence is Co-chaperonin GroES (96 aa).

This sequence belongs to the GroES chaperonin family. As to quaternary structure, heptamer of 7 subunits arranged in a ring. Interacts with the chaperonin GroEL.

It localises to the cytoplasm. Together with the chaperonin GroEL, plays an essential role in assisting protein folding. The GroEL-GroES system forms a nano-cage that allows encapsulation of the non-native substrate proteins and provides a physical environment optimized to promote and accelerate protein folding. GroES binds to the apical surface of the GroEL ring, thereby capping the opening of the GroEL channel. In Shewanella denitrificans (strain OS217 / ATCC BAA-1090 / DSM 15013), this protein is Co-chaperonin GroES.